A 109-amino-acid polypeptide reads, in one-letter code: T cell receptor alpha variable 27 (109 aa).

The first 19 residues, 1–19 (MVLKFSVSILWIQLAWVST), serve as a signal peptide directing secretion. An Ig-like domain is found at 20 to 109 (QLLEQSPQFL…GDTGLYLCAG (90 aa)). Residues asparagine 36 and asparagine 42 are each glycosylated (N-linked (GlcNAc...) asparagine). An intrachain disulfide couples cysteine 41 to cysteine 107.

In terms of assembly, alpha-beta TR is a heterodimer composed of an alpha and beta chain; disulfide-linked. The alpha-beta TR is associated with the transmembrane signaling CD3 coreceptor proteins to form the TR-CD3 (TcR or TCR). The assembly of alpha-beta TR heterodimers with CD3 occurs in the endoplasmic reticulum where a single alpha-beta TR heterodimer associates with one CD3D-CD3E heterodimer, one CD3G-CD3E heterodimer and one CD247 homodimer forming a stable octameric structure. CD3D-CD3E and CD3G-CD3E heterodimers preferentially associate with TR alpha and TR beta chains, respectively. The association of the CD247 homodimer is the last step of TcR assembly in the endoplasmic reticulum and is required for transport to the cell surface. (Microbial infection) Interacts with Staphylococcus aureus enterotoxin H/entH.

It localises to the cell membrane. Its function is as follows. V region of the variable domain of T cell receptor (TR) alpha chain that participates in the antigen recognition. Alpha-beta T cell receptors are antigen specific receptors which are essential to the immune response and are present on the cell surface of T lymphocytes. Recognize peptide-major histocompatibility (MH) (pMH) complexes that are displayed by antigen presenting cells (APC), a prerequisite for efficient T cell adaptive immunity against pathogens. Binding of alpha-beta TR to pMH complex initiates TR-CD3 clustering on the cell surface and intracellular activation of LCK that phosphorylates the ITAM motifs of CD3G, CD3D, CD3E and CD247 enabling the recruitment of ZAP70. In turn, ZAP70 phosphorylates LAT, which recruits numerous signaling molecules to form the LAT signalosome. The LAT signalosome propagates signal branching to three major signaling pathways, the calcium, the mitogen-activated protein kinase (MAPK) kinase and the nuclear factor NF-kappa-B (NF-kB) pathways, leading to the mobilization of transcription factors that are critical for gene expression and essential for T cell growth and differentiation. The T cell repertoire is generated in the thymus, by V-(D)-J rearrangement. This repertoire is then shaped by intrathymic selection events to generate a peripheral T cell pool of self-MH restricted, non-autoaggressive T cells. Post-thymic interaction of alpha-beta TR with the pMH complexes shapes TR structural and functional avidity. This Homo sapiens (Human) protein is T cell receptor alpha variable 27.